A 263-amino-acid chain; its full sequence is MARGPKKHLKRLNAPKAWMLDKLGGVYAPRPSTGPHKLRECLPLVIFLRNRLKYALTGNEVLKIVKQRLIKVDGKVRTDPTYPAGFMDVVSIEKTNELFRLIYDVKGRFTIHRITPEEAKYKLCKVKRVATGPKNVPYLVTHDGRTIRYPDPLIKVNDSIQLDIATTKIMDFIKFESGNLCMITGGRNLGRVGTIVSRERHPGSFDIVHIKDSTGHTFATRLNNVFIIGKGTKAYISLPRGKGIRLTIAEERDKRIAAKVAAQ.

An S4 RNA-binding domain is found at 42–104 (LPLVIFLRNR…TNELFRLIYD (63 aa)).

Belongs to the eukaryotic ribosomal protein eS4 family.

This is Small ribosomal subunit protein eS4 (RpS4) from Bombyx mori (Silk moth).